Reading from the N-terminus, the 314-residue chain is 3'-5' exoribonuclease YhaM (314 aa).

The HD domain occupies 163–279; it reads HVVSMLNLAK…LHYIDNLDAK (117 aa).

The protein belongs to the YhaM family.

Functionally, shows a 3'-5' exoribonuclease activity. This Bacillus velezensis (strain DSM 23117 / BGSC 10A6 / LMG 26770 / FZB42) (Bacillus amyloliquefaciens subsp. plantarum) protein is 3'-5' exoribonuclease YhaM.